We begin with the raw amino-acid sequence, 389 residues long: Leucine aminopeptidase 1 (389 aa).

Positions 1 to 18 (MKSAALLLPLYAAAFAAA) are cleaved as a signal peptide. A propeptide spanning residues 19-89 (AFHHEHAQAV…TLKRRINAAS (71 aa)) is cleaved from the precursor. Asparagine 99 carries N-linked (GlcNAc...) asparagine glycosylation. Zn(2+)-binding residues include histidine 188, aspartate 207, glutamate 246, and aspartate 273. A disulfide bridge connects residues cysteine 322 and cysteine 326. Position 355 (histidine 355) interacts with Zn(2+).

The protein belongs to the peptidase M28 family. M28E subfamily. Monomer. Zn(2+) is required as a cofactor.

Its subcellular location is the secreted. Extracellular aminopeptidase that allows assimilation of proteinaceous substrates. The protein is Leucine aminopeptidase 1 (lap1) of Pyrenophora teres f. teres (strain 0-1) (Barley net blotch fungus).